The chain runs to 120 residues: Response regulator receiver protein CpdR (120 aa).

In terms of domain architecture, Response regulatory spans 3–117; it reads RILLAEDDND…DLVNEIEKML (115 aa). A 4-aspartylphosphate modification is found at aspartate 52.

Post-translationally, is phosphorylated by ChpT-P on Asp-52.

It is found in the cytoplasm. In terms of biological role, component of a regulatory phosphorelay system that controls B.abortus cell growth, division, and intracellular survival inside mammalian host cells. This signaling pathway is composed of CckA, ChpT, CtrA and CpdR. CpdR is a response regulator substrate of ChpT. Unphosphorylated CpdR controls steady-state levels of CtrA in the B.abortus cell, likely via CtrA destabilization and activation of its proteolysis. The polypeptide is Response regulator receiver protein CpdR (Brucella abortus (strain 2308)).